Here is a 199-residue protein sequence, read N- to C-terminus: MSSGNAKIGYPAPNFKATAVMPDGQFRDICLSEYRGKYVVFFFYPLDFTFVCPTEIIAFSDRAEEFKKLNCQVIGASVDSHFCHLAWINTPKKQGGLGPMNIPLVSDPKRTIAQDYGVLKADEGISFRGLFIIDDKGILRQITINDLPVGRSVDEILRLVQAFQFTDKHGEVCPAGWKPGSDTIKPDVQKSKEYFSKQK.

Ser2 carries the N-acetylserine modification. Residues 6–165 (AKIGYPAPNF…ILRLVQAFQF (160 aa)) form the Thioredoxin domain. Lys7 carries the post-translational modification N6-acetyllysine; alternate. Residue Lys7 forms a Glycyl lysine isopeptide (Lys-Gly) (interchain with G-Cter in SUMO2); alternate linkage. Position 16 is an N6-acetyllysine (Lys16). Phosphoserine is present on Ser32. The Cysteine sulfenic acid (-SOH) intermediate role is filled by Cys52. Thr90 carries the post-translational modification Phosphothreonine. A Glycyl lysine isopeptide (Lys-Gly) (interchain with G-Cter in SUMO2) cross-link involves residue Lys120. Lys136 is modified (N6-acetyllysine). Positions 176-199 (GWKPGSDTIKPDVQKSKEYFSKQK) are disordered. The span at 184 to 199 (IKPDVQKSKEYFSKQK) shows a compositional bias: basic and acidic residues. Lys185 participates in a covalent cross-link: Glycyl lysine isopeptide (Lys-Gly) (interchain with G-Cter in SUMO1). Lys197 is modified (N6-acetyllysine).

The protein belongs to the peroxiredoxin family. AhpC/Prx1 subfamily. In terms of assembly, homodimer; disulfide-linked, upon oxidation. 5 homodimers assemble to form a ring-like decamer. Interacts with GDPD5; forms a mixed-disulfide with GDPD5. Interacts with SESN1 and SESN2. Interacts with FAM107A. In terms of processing, phosphorylated on Thr-90 during the M-phase, which leads to a decrease in enzymatic activity. Post-translationally, acetylation increases reducing activity and resistance to superoxidation. Deacetylated by HDAC6 which decreases reducing activity.

The protein localises to the cytoplasm. The catalysed reaction is a hydroperoxide + [thioredoxin]-dithiol = an alcohol + [thioredoxin]-disulfide + H2O. In terms of biological role, thiol-specific peroxidase that catalyzes the reduction of hydrogen peroxide and organic hydroperoxides to water and alcohols, respectively. Plays a role in cell protection against oxidative stress by detoxifying peroxides and as sensor of hydrogen peroxide-mediated signaling events. Might participate in the signaling cascades of growth factors and tumor necrosis factor-alpha by regulating the intracellular concentrations of H(2)O(2). Reduces an intramolecular disulfide bond in GDPD5 that gates the ability to GDPD5 to drive postmitotic motor neuron differentiation. The protein is Peroxiredoxin-1 (PRDX1) of Cricetulus griseus (Chinese hamster).